The following is a 121-amino-acid chain: Small ribosomal subunit protein uS13 (121 aa).

Residues 91–121 (HRRGLPVRGQNTKNNARTRKGKKASMAGKKK) form a disordered region. Positions 106–121 (ARTRKGKKASMAGKKK) are enriched in basic residues.

It belongs to the universal ribosomal protein uS13 family. As to quaternary structure, part of the 30S ribosomal subunit. Forms a loose heterodimer with protein S19. Forms two bridges to the 50S subunit in the 70S ribosome.

Functionally, located at the top of the head of the 30S subunit, it contacts several helices of the 16S rRNA. In the 70S ribosome it contacts the 23S rRNA (bridge B1a) and protein L5 of the 50S subunit (bridge B1b), connecting the 2 subunits; these bridges are implicated in subunit movement. Contacts the tRNAs in the A and P-sites. The protein is Small ribosomal subunit protein uS13 of Lacticaseibacillus paracasei (strain ATCC 334 / BCRC 17002 / CCUG 31169 / CIP 107868 / KCTC 3260 / NRRL B-441) (Lactobacillus paracasei).